The sequence spans 1239 residues: Zinc finger and BTB domain-containing protein 40 (1239 aa).

The region spanning 24 to 87 (CDCTISIGTI…MYTGKLPVGK (64 aa)) is the BTB domain. 3 disordered regions span residues 130 to 231 (SAPS…TSTE), 687 to 732 (HLEA…PDPA), and 779 to 801 (KELD…PKKK). Over residues 136–145 (TFRKEPEKPQ) the composition is skewed to basic and acidic residues. Over residues 181–199 (SVSQEMSVNSPTAQESQRN) the composition is skewed to polar residues. Serine 190 carries the phosphoserine modification. Low complexity predominate over residues 200–212 (AETPAETPTTAEA). Residues 687-703 (HLEANNKEDEKAAKEDS) are compositionally biased toward basic and acidic residues. Serine 703 bears the Phosphoserine mark. Over residues 705 to 719 (PGEQNDQGETGSLPG) the composition is skewed to polar residues. 10 C2H2-type zinc fingers span residues 807–830 (VTCD…LTEH), 836–858 (FSCE…LRLH), 864–887 (FMCK…KKKH), 893–915 (YACQ…VRTH), 921–944 (YVCR…HTFH), 950–973 (YDCK…HEVH), 978–1000 (HPCP…VVTH), 1006–1029 (FSCG…RTHH), 1046–1069 (LQCS…KAEH), and 1075–1098 (HECD…KCQH). Lysine 1066 participates in a covalent cross-link: Glycyl lysine isopeptide (Lys-Gly) (interchain with G-Cter in SUMO2). The segment at 1104–1127 (FRCLYCAATFRFPGALQHHVTTEH) adopts a C2H2-type 11; atypical zinc-finger fold. The C2H2-type 12 zinc finger occupies 1135 to 1158 (FPCELCGELFTSQAQLDSHLESEH).

It belongs to the krueppel C2H2-type zinc-finger protein family.

It is found in the nucleus. Its function is as follows. May be involved in transcriptional regulation. The protein is Zinc finger and BTB domain-containing protein 40 (ZBTB40) of Homo sapiens (Human).